The sequence spans 353 residues: MKLTDNEEITMNGTREMETTEQETSSPCSLVIEAFPVKKSIIVGYALTSKKIKSFLQPKLEGLARNKGILFVAIDQNKPLSEQGPFDIVLHKQIGKEWRRILEEFRLAHPDVTVLDPPDAILHLRNRQSMLQCVADMNLSDSNGRVGVPKQLVIKKDASSIPEAVNNAGLRLPLVAKPLVADGSAKSHELSLAYDQHSLLKLEPPLVLQEFVNHGGVLFKVYIVGEAIRVVRRFSLPDVSRRELPKSAGVFRFPRVSCAAASADDADLDPSIAELPPRPLLERLAKELRRGLGLRLFNLDIIREHGTRDRFYVIDINYFPGYGKMPEYEHVFTDFLLSVVQSQCKKRALADQY.

The interval 1 to 25 (MKLTDNEEITMNGTREMETTEQETS) is disordered. The 1D-myo-inositol 1,3,4-trisphosphate site is built by Lys-50 and Lys-92. Arg-127 and Lys-177 together coordinate ATP. An ATP-grasp domain is found at 138-350 (NLSDSNGRVG…QSQCKKRALA (213 aa)). Residues His-188 and Lys-220 each coordinate 1D-myo-inositol 1,3,4-trisphosphate. ATP is bound by residues 209–220 (QEFVNHGGVLFK) and Ser-235. Positions 300, 315, and 317 each coordinate Mg(2+). Asn-317 contributes to the 1D-myo-inositol 1,3,4-trisphosphate binding site.

This sequence belongs to the ITPK1 family. As to quaternary structure, monomer. The cofactor is Mg(2+). As to expression, highly expressed in leaves and flowers, and at lower levels in roots, stems, cauline leaves and siliques.

The catalysed reaction is 1D-myo-inositol 3,4,5,6-tetrakisphosphate + ATP = 1D-myo-inositol 1,3,4,5,6-pentakisphosphate + ADP + H(+). It catalyses the reaction 1D-myo-inositol 1,3,4-trisphosphate + ATP = 1D-myo-inositol 1,3,4,5-tetrakisphosphate + ADP + H(+). The enzyme catalyses 1D-myo-inositol 1,3,4-trisphosphate + ATP = 1D-myo-inositol 1,3,4,6-tetrakisphosphate + ADP + H(+). Kinase that can phosphorylate various inositol polyphosphate such as Ins(3,4,5,6)P4 or Ins(1,3,4)P3. Phosphorylates Ins(3,4,5,6)P4 to form InsP5. This reaction is thought to have regulatory importance, since Ins(3,4,5,6)P4 is an inhibitor of plasma membrane Ca(2+)-activated Cl(-) channels, while Ins(1,3,4,5,6)P5 is not. Also phosphorylates Ins(1,3,4)P3 or a racemic mixture of Ins(1,4,6)P3 and Ins(3,4,6)P3 to form InsP4. Ins(1,3,4,6)P4 is an essential molecule in the hexakisphosphate (InsP6) pathway. This Arabidopsis thaliana (Mouse-ear cress) protein is Inositol-tetrakisphosphate 1-kinase 3 (ITPK3).